The chain runs to 75 residues: Small ribosomal subunit protein bS18 (75 aa).

The span at 1-11 shows a compositional bias: basic residues; that stretch reads MAAKPFFRRRK. The disordered stretch occupies residues 1–21; that stretch reads MAAKPFFRRRKTDPFEGENAP.

This sequence belongs to the bacterial ribosomal protein bS18 family. In terms of assembly, part of the 30S ribosomal subunit. Forms a tight heterodimer with protein bS6.

Binds as a heterodimer with protein bS6 to the central domain of the 16S rRNA, where it helps stabilize the platform of the 30S subunit. The polypeptide is Small ribosomal subunit protein bS18 (Jannaschia sp. (strain CCS1)).